We begin with the raw amino-acid sequence, 889 residues long: MKGSELRQRFLDYFARQGHAVVPSSSLIPADNPTLLFTVAGMVQFNDVFLGRESRPYSRAVSSQKCLRISGKQNDLENVGPSPRHHTFFEMLGNFSFGDYFKKDAIRFAWEFLTQEIGLDPKRMWVSIYEGDEQIPADEEAHDLWLAYMPAERILRFDAKDNLWSAGDVGPRGPCSEIHYYIGDDPDNQVPEGVNSEDDTYMEIWNLVFMQYNRDENGVLTLLPKPSIDTGMSLERLAIVKQGVFRSYETDLFTPIIHTVMELLGTGSDHYQANSSAYHVVADHSRSIAFMIADGLRPGNEGRSYVLRRLVRRAAYFGQTIGFKAPFLAETIATVIDMMGAAYPELRSKQAYIAEVVTGEEERFNKTLAGGLRQLEAMLPNQADKAVFSGADAFKLYDTYGFPLDLTERIVAERGLTVDLAGYEAELEAQRARGRGAAQFKKGAVTERWAERNLAPTSFTGYNELESWGHVLALEFDGEELGTVQRGQEVAFVLDRTPCYAESGGQMGDSGVLVGPHGTIVIDDVQKPVPGVFVHRGKVSKGSVSLGEQVTVTVDAARRRDIVRNHTATHLLHRALRDTLGDHAEQKGSLVAPERLRFDFNNQKGLSSEQLQQIEDQVNAWIRADSKVEAAEMALPQARELGAMALFGEKYGDVVRVVTVGCGNASDHIHTNSEAPVCSRELCGGVHVARTGEIGFFKIVSEGSVASGVRRIEAVTGRAAAEWVSQQAQLIRTLGDKLGAQPGKVEEKLDALLLDQKARRDEIERLRGEIAAGQVDSLLAQKIEQAGTPLVVARVEASDADSFRRLGEQLRDKIGSGVVILGTVIDGKPLLLAAATADQVKAGRHAGNLVKALAAKVGGGGGGRADFAQAGGRDAAALDQALAEANGLL.

Residues His-566, His-570, Cys-683, and His-687 each coordinate Zn(2+).

It belongs to the class-II aminoacyl-tRNA synthetase family. The cofactor is Zn(2+).

The protein localises to the cytoplasm. It catalyses the reaction tRNA(Ala) + L-alanine + ATP = L-alanyl-tRNA(Ala) + AMP + diphosphate. Functionally, catalyzes the attachment of alanine to tRNA(Ala) in a two-step reaction: alanine is first activated by ATP to form Ala-AMP and then transferred to the acceptor end of tRNA(Ala). Also edits incorrectly charged Ser-tRNA(Ala) and Gly-tRNA(Ala) via its editing domain. In Herpetosiphon aurantiacus (strain ATCC 23779 / DSM 785 / 114-95), this protein is Alanine--tRNA ligase.